The primary structure comprises 402 residues: Tol-Pal system protein TolB (402 aa).

The signal sequence occupies residues 1-17 (MKKIVAIFLVFLGSLWA).

The protein belongs to the TolB family. As to quaternary structure, the Tol-Pal system is composed of five core proteins: the inner membrane proteins TolA, TolQ and TolR, the periplasmic protein TolB and the outer membrane protein Pal. They form a network linking the inner and outer membranes and the peptidoglycan layer.

Its subcellular location is the periplasm. Functionally, part of the Tol-Pal system, which plays a role in outer membrane invagination during cell division and is important for maintaining outer membrane integrity. The protein is Tol-Pal system protein TolB of Campylobacter jejuni subsp. jejuni serotype O:2 (strain ATCC 700819 / NCTC 11168).